The sequence spans 119 residues: Large ribosomal subunit protein bL20 (119 aa).

The protein belongs to the bacterial ribosomal protein bL20 family.

Functionally, binds directly to 23S ribosomal RNA and is necessary for the in vitro assembly process of the 50S ribosomal subunit. It is not involved in the protein synthesizing functions of that subunit. This is Large ribosomal subunit protein bL20 from Streptococcus pneumoniae serotype 2 (strain D39 / NCTC 7466).